Reading from the N-terminus, the 208-residue chain is Uracil phosphoribosyltransferase (208 aa).

5-phospho-alpha-D-ribose 1-diphosphate-binding positions include arginine 78, arginine 103, and 130 to 138 (DPMLATGGS). Residues isoleucine 193 and 198–200 (GDA) each bind uracil. Aspartate 199 is a 5-phospho-alpha-D-ribose 1-diphosphate binding site.

It belongs to the UPRTase family. Mg(2+) is required as a cofactor.

The catalysed reaction is UMP + diphosphate = 5-phospho-alpha-D-ribose 1-diphosphate + uracil. It functions in the pathway pyrimidine metabolism; UMP biosynthesis via salvage pathway; UMP from uracil: step 1/1. With respect to regulation, allosterically activated by GTP. Catalyzes the conversion of uracil and 5-phospho-alpha-D-ribose 1-diphosphate (PRPP) to UMP and diphosphate. The polypeptide is Uracil phosphoribosyltransferase (Neisseria meningitidis serogroup C (strain 053442)).